Reading from the N-terminus, the 95-residue chain is YcgL domain-containing protein Patl_2802 (95 aa).

A YcgL domain is found at 4-88 (LLCAVYKSSK…PEENLLKQHL (85 aa)).

This chain is YcgL domain-containing protein Patl_2802, found in Pseudoalteromonas atlantica (strain T6c / ATCC BAA-1087).